Consider the following 745-residue polypeptide: Phosphoribosylformylglycinamidine synthase subunit PurL (745 aa).

H47 is an active-site residue. Residues Y50 and K90 each coordinate ATP. A Mg(2+)-binding site is contributed by E92. Residues 93–96 (SHNH) and R115 contribute to the substrate site. Catalysis depends on H94, which acts as the Proton acceptor. Position 116 (D116) interacts with Mg(2+). Position 240 (Q240) interacts with substrate. Position 268 (D268) interacts with Mg(2+). Residue 312-314 (ESQ) coordinates substrate. The ATP site is built by N501 and G538. Mg(2+) is bound at residue N539. S541 is a binding site for substrate.

The protein belongs to the FGAMS family. As to quaternary structure, monomer. Part of the FGAM synthase complex composed of 1 PurL, 1 PurQ and 2 PurS subunits.

Its subcellular location is the cytoplasm. It carries out the reaction N(2)-formyl-N(1)-(5-phospho-beta-D-ribosyl)glycinamide + L-glutamine + ATP + H2O = 2-formamido-N(1)-(5-O-phospho-beta-D-ribosyl)acetamidine + L-glutamate + ADP + phosphate + H(+). It functions in the pathway purine metabolism; IMP biosynthesis via de novo pathway; 5-amino-1-(5-phospho-D-ribosyl)imidazole from N(2)-formyl-N(1)-(5-phospho-D-ribosyl)glycinamide: step 1/2. Part of the phosphoribosylformylglycinamidine synthase complex involved in the purines biosynthetic pathway. Catalyzes the ATP-dependent conversion of formylglycinamide ribonucleotide (FGAR) and glutamine to yield formylglycinamidine ribonucleotide (FGAM) and glutamate. The FGAM synthase complex is composed of three subunits. PurQ produces an ammonia molecule by converting glutamine to glutamate. PurL transfers the ammonia molecule to FGAR to form FGAM in an ATP-dependent manner. PurS interacts with PurQ and PurL and is thought to assist in the transfer of the ammonia molecule from PurQ to PurL. This is Phosphoribosylformylglycinamidine synthase subunit PurL from Leptospira interrogans serogroup Icterohaemorrhagiae serovar copenhageni (strain Fiocruz L1-130).